Here is a 388-residue protein sequence, read N- to C-terminus: MSQPRTVTVLGATGSIGHSTLDLIERNLDRYQVIALTANRNVKDLADAAKRTNAKRAVIADPSLYNDLKEALAGSSVEAAAGADALVEAAMMGADWTMAAIIGCAGLKATLAAIRKGKTVALANKESLVSAGGLMIDAVREHGTTLLPVDSEHNAIFQCFPHHNRDYVRRIIITASGGPFRTTSLAEMATVTPERAVQHPNWSMGAKISIDSATMMNKGLELIEAYHLFQIPLEKFEILVHPQSVIHSMVEYLDGSILAQIGSPDMRTPIGHTLAWPKRMETPAESLDFTKLRQMDFEAPDYERFPALTLAMESIKSGGARPAVMNAANEIAVAAFLDKKIGFLDIAKIVEKTLDHYTPATPSSLEDVFAIDNEARIQAAALMESLPA.

Positions 13, 14, 15, 16, 40, 41, and 124 each coordinate NADPH. Position 125 (Lys-125) interacts with 1-deoxy-D-xylulose 5-phosphate. NADPH is bound at residue Glu-126. Asp-150 contacts Mn(2+). 1-deoxy-D-xylulose 5-phosphate is bound by residues Ser-151, Glu-152, Ser-176, and His-199. Residue Glu-152 coordinates Mn(2+). Gly-205 contributes to the NADPH binding site. 1-deoxy-D-xylulose 5-phosphate is bound by residues Ser-212, Asn-217, Lys-218, and Glu-221. Residue Glu-221 participates in Mn(2+) binding.

Belongs to the DXR family. Homodimer. Mg(2+) is required as a cofactor. Requires Mn(2+) as cofactor. Co(2+) serves as cofactor.

The catalysed reaction is 2-C-methyl-D-erythritol 4-phosphate + NADP(+) = 1-deoxy-D-xylulose 5-phosphate + NADPH + H(+). It functions in the pathway isoprenoid biosynthesis; isopentenyl diphosphate biosynthesis via DXP pathway; isopentenyl diphosphate from 1-deoxy-D-xylulose 5-phosphate: step 1/6. With respect to regulation, competitively inhibited by the antibiotic fosmidomycin. Functionally, catalyzes the NADPH-dependent rearrangement and reduction of 1-deoxy-D-xylulose-5-phosphate (DXP) to 2-C-methyl-D-erythritol 4-phosphate (MEP). Cannot use NADH instead of NADPH as the reducing agent. The sequence is that of 1-deoxy-D-xylulose 5-phosphate reductoisomerase from Zymomonas mobilis subsp. mobilis (strain ATCC 31821 / ZM4 / CP4).